The primary structure comprises 436 residues: MSIFTKIKKSLKSENLVNYNKFIKNLEFDEKNSTSTHLIIKAPNIFIANFVKRKYLNKISELYEKETGIKPKIDIVTKEISHRPLTIEEIIEPTTPSVLIPEYTFESFIVGPSNQFAYTAAKSVAENPGKNYNPLFIYGGVGLGKTHLLQAIGNYLKSSLNVLYVTSEQFMNEFTENIRMKTPERFHEKYRNCDVLLIDDVQFFAGKERTQEEFFHTFNELYNQKKQICLTADRPPKKLYDLVDRLRSRFEAGLIVDIQPPELETKIEIIRKKCELNGIYLPEEIIEYIATKLDSNIREIEGMITKINAMSKILGISEITLDFAKQALKEHIKDKKEVITLEDIIKLIAKEFNIKPSEIVSKSRNKNIVAARRCAIYLAREFTKESTPIIAKYFGLRDHSAVSHAIKSFNKKLKEDSEFRIKIEELKNKIQIKKSE.

Residues 1–69 (MSIFTKIKKS…SELYEKETGI (69 aa)) are domain I, interacts with DnaA modulators. A domain II region spans residues 69–97 (IKPKIDIVTKEISHRPLTIEEIIEPTTPS). Residues 98–311 (VLIPEYTFES…GMITKINAMS (214 aa)) are domain III, AAA+ region. 4 residues coordinate ATP: G142, G144, K145, and T146. Residues 312 to 436 (KILGISEITL…KNKIQIKKSE (125 aa)) are domain IV, binds dsDNA.

This sequence belongs to the DnaA family. In terms of assembly, oligomerizes as a right-handed, spiral filament on DNA at oriC.

Its subcellular location is the cytoplasm. Plays an essential role in the initiation and regulation of chromosomal replication. ATP-DnaA binds to the origin of replication (oriC) to initiate formation of the DNA replication initiation complex once per cell cycle. Binds the DnaA box (a 9 base pair repeat at the origin) and separates the double-stranded (ds)DNA. Forms a right-handed helical filament on oriC DNA; dsDNA binds to the exterior of the filament while single-stranded (ss)DNA is stabiized in the filament's interior. The ATP-DnaA-oriC complex binds and stabilizes one strand of the AT-rich DNA unwinding element (DUE), permitting loading of DNA polymerase. After initiation quickly degrades to an ADP-DnaA complex that is not apt for DNA replication. Binds acidic phospholipids. This is Chromosomal replication initiator protein DnaA from Nautilia profundicola (strain ATCC BAA-1463 / DSM 18972 / AmH).